A 122-amino-acid polypeptide reads, in one-letter code: Small ribosomal subunit protein uS13 (122 aa).

Positions 95–122 (GLPVRGQRTKTNSRTRKGRRKTVANKKK) are disordered. Residues 101–122 (QRTKTNSRTRKGRRKTVANKKK) show a composition bias toward basic residues.

It belongs to the universal ribosomal protein uS13 family. As to quaternary structure, part of the 30S ribosomal subunit. Forms a loose heterodimer with protein S19. Forms two bridges to the 50S subunit in the 70S ribosome.

Located at the top of the head of the 30S subunit, it contacts several helices of the 16S rRNA. In the 70S ribosome it contacts the 23S rRNA (bridge B1a) and protein L5 of the 50S subunit (bridge B1b), connecting the 2 subunits; these bridges are implicated in subunit movement. Contacts the tRNAs in the A and P-sites. The polypeptide is Small ribosomal subunit protein uS13 (Protochlamydia amoebophila (strain UWE25)).